The primary structure comprises 431 residues: Serine hydroxymethyltransferase (431 aa).

Residues L127 and 131 to 133 each bind (6S)-5,6,7,8-tetrahydrofolate; that span reads GHL. The residue at position 236 (K236) is an N6-(pyridoxal phosphate)lysine.

This sequence belongs to the SHMT family. As to quaternary structure, homodimer. It depends on pyridoxal 5'-phosphate as a cofactor.

The protein resides in the cytoplasm. It catalyses the reaction (6R)-5,10-methylene-5,6,7,8-tetrahydrofolate + glycine + H2O = (6S)-5,6,7,8-tetrahydrofolate + L-serine. It participates in one-carbon metabolism; tetrahydrofolate interconversion. Its pathway is amino-acid biosynthesis; glycine biosynthesis; glycine from L-serine: step 1/1. Catalyzes the reversible interconversion of serine and glycine with tetrahydrofolate (THF) serving as the one-carbon carrier. This reaction serves as the major source of one-carbon groups required for the biosynthesis of purines, thymidylate, methionine, and other important biomolecules. Also exhibits THF-independent aldolase activity toward beta-hydroxyamino acids, producing glycine and aldehydes, via a retro-aldol mechanism. This chain is Serine hydroxymethyltransferase, found in Granulibacter bethesdensis (strain ATCC BAA-1260 / CGDNIH1).